The chain runs to 121 residues: Small ribosomal subunit protein uS13 (121 aa).

The segment at 92 to 121 (RKGLPVRGQSSKTNARTVKGPRKTVANKKK) is disordered. A compositionally biased stretch (basic residues) spans 110–121 (KGPRKTVANKKK).

The protein belongs to the universal ribosomal protein uS13 family. Part of the 30S ribosomal subunit. Forms a loose heterodimer with protein S19. Forms two bridges to the 50S subunit in the 70S ribosome.

Located at the top of the head of the 30S subunit, it contacts several helices of the 16S rRNA. In the 70S ribosome it contacts the 23S rRNA (bridge B1a) and protein L5 of the 50S subunit (bridge B1b), connecting the 2 subunits; these bridges are implicated in subunit movement. Contacts the tRNAs in the A and P-sites. In Mycoplasma mycoides subsp. mycoides SC (strain CCUG 32753 / NCTC 10114 / PG1), this protein is Small ribosomal subunit protein uS13.